The primary structure comprises 515 residues: Probable multifunctional siroheme biosynthesis protein HemA (515 aa).

Residues 26–27 and 47–48 contribute to the NAD(+) site; these read SL and IR. Residues 26-174 form a glutamyl-tRNA reductase region; it reads SLDYKSAAID…TAAKKAKTEI (149 aa). L-glutamyl-tRNA(Glu) is bound by residues 68 to 71, Ser-127, Glu-132, and Gln-138; that span reads TCNR. Residue Cys-69 is the Nucleophile of the active site. 206–211 lines the NADP(+) pocket; it reads GNGEIG. Residues 367 to 507 are precorrin-2 dehydrogenase /sirohydrochlorin ferrochelatase; sequence FPLFIDLSGK…SLVKSVAEQI (141 aa).

This sequence in the N-terminal section; belongs to the glutamyl-tRNA reductase family. It in the C-terminal section; belongs to the precorrin-2 dehydrogenase / sirohydrochlorin ferrochelatase family. Homodimer.

It carries out the reaction (S)-4-amino-5-oxopentanoate + tRNA(Glu) + NADP(+) = L-glutamyl-tRNA(Glu) + NADPH + H(+). The catalysed reaction is precorrin-2 + NAD(+) = sirohydrochlorin + NADH + 2 H(+). It catalyses the reaction siroheme + 2 H(+) = sirohydrochlorin + Fe(2+). It functions in the pathway cofactor biosynthesis; adenosylcobalamin biosynthesis; sirohydrochlorin from precorrin-2: step 1/1. Its pathway is porphyrin-containing compound metabolism; siroheme biosynthesis; siroheme from sirohydrochlorin: step 1/1. It participates in porphyrin-containing compound metabolism; siroheme biosynthesis; sirohydrochlorin from precorrin-2: step 1/1. The protein operates within porphyrin-containing compound metabolism; protoporphyrin-IX biosynthesis; 5-aminolevulinate from L-glutamyl-tRNA(Glu): step 1/2. Multifunctional enzyme that catalyzes the NADPH-dependent reduction of glutamyl-tRNA(Glu) to glutamate 1-semialdehyde (GSA), the NAD-dependent ring dehydrogenation of precorrin-2 to sirohydrochlorin and finally, the ferrochelation of sirohydrochlorin to yield siroheme. The protein is Probable multifunctional siroheme biosynthesis protein HemA of Ruminiclostridium josui (Clostridium josui).